The chain runs to 201 residues: Dephospho-CoA kinase (201 aa).

Residues 4-201 (VIGLTGGIAS…LLDTWSNIEK (198 aa)) enclose the DPCK domain. 12–17 (ASGKST) provides a ligand contact to ATP.

It belongs to the CoaE family.

The protein localises to the cytoplasm. It catalyses the reaction 3'-dephospho-CoA + ATP = ADP + CoA + H(+). It participates in cofactor biosynthesis; coenzyme A biosynthesis; CoA from (R)-pantothenate: step 5/5. Functionally, catalyzes the phosphorylation of the 3'-hydroxyl group of dephosphocoenzyme A to form coenzyme A. This Bacillus licheniformis (strain ATCC 14580 / DSM 13 / JCM 2505 / CCUG 7422 / NBRC 12200 / NCIMB 9375 / NCTC 10341 / NRRL NRS-1264 / Gibson 46) protein is Dephospho-CoA kinase.